The following is a 506-amino-acid chain: Dolichyl pyrophosphate Glc1Man9GlcNAc2 alpha-1,3-glucosyltransferase (506 aa).

A run of 12 helical transmembrane segments spans residues Arg10–Ser30, Val101–Tyr121, Asn133–Phe153, Leu176–Ala196, Leu219–Tyr239, Tyr261–Leu281, Pro305–Ile325, Gly339–Val359, His384–Tyr401, Tyr406–Ala426, Tyr454–Gly474, and Phe479–Trp499.

It belongs to the ALG6/ALG8 glucosyltransferase family.

Its subcellular location is the endoplasmic reticulum membrane. It catalyses the reaction an alpha-D-Glc-(1-&gt;3)-alpha-D-Man-(1-&gt;2)-alpha-D-Man-(1-&gt;2)-alpha-D-Man-(1-&gt;3)-[alpha-D-Man-(1-&gt;2)-alpha-D-Man-(1-&gt;3)-[alpha-D-Man-(1-&gt;2)-alpha-D-Man-(1-&gt;6)]-alpha-D-Man-(1-&gt;6)]-beta-D-Man-(1-&gt;4)-beta-D-GlcNAc-(1-&gt;4)-alpha-D-GlcNAc-diphospho-di-trans,poly-cis-dolichol + a di-trans,poly-cis-dolichyl beta-D-glucosyl phosphate = an alpha-D-Glc-(1-&gt;3)-alpha-D-Glc-(1-&gt;3)-alpha-D-Man-(1-&gt;2)-alpha-D-Man-(1-&gt;2)-alpha-D-Man-(1-&gt;3)-[alpha-D-Man-(1-&gt;2)-alpha-D-Man-(1-&gt;3)-[alpha-D-Man-(1-&gt;2)-alpha-D-Man-(1-&gt;6)]-alpha-D-Man-(1-&gt;6)]-beta-D-Man-(1-&gt;4)-beta-D-GlcNAc-(1-&gt;4)-alpha-D-GlcNAc-diphospho-di-trans,poly-cis-dolichol + a di-trans,poly-cis-dolichyl phosphate + H(+). Its pathway is protein modification; protein glycosylation. In terms of biological role, dolichyl pyrophosphate Glc1Man9GlcNAc2 alpha-1,3-glucosyltransferase that operates in the biosynthetic pathway of dolichol-linked oligosaccharides, the glycan precursors employed in protein asparagine (N)-glycosylation. The assembly of dolichol-linked oligosaccharides begins on the cytosolic side of the endoplasmic reticulum membrane and finishes in its lumen. The sequential addition of sugars to dolichol pyrophosphate produces dolichol-linked oligosaccharides containing fourteen sugars, including two GlcNAcs, nine mannoses and three glucoses. Once assembled, the oligosaccharide is transferred from the lipid to nascent proteins by oligosaccharyltransferases. In the lumen of the endoplasmic reticulum, adds the second glucose residue from dolichyl phosphate glucose (Dol-P-Glc) onto the lipid-linked oligosaccharide intermediate Glc(1)Man(9)GlcNAc(2)-PP-Dol to produce Glc(2)Man(9)GlcNAc(2)-PP-Dol. This Arabidopsis thaliana (Mouse-ear cress) protein is Dolichyl pyrophosphate Glc1Man9GlcNAc2 alpha-1,3-glucosyltransferase.